Consider the following 275-residue polypeptide: Phage-like element PBSX protein XkdF (275 aa).

The disordered stretch occupies residues 247–275 (KARGASKQTADDTGGNTEQVKKSIWSGLL).

It to B.subtilis YqbD.

The polypeptide is Phage-like element PBSX protein XkdF (xkdF) (Bacillus subtilis (strain 168)).